Reading from the N-terminus, the 315-residue chain is Ankyrin repeat domain-containing protein EMB506, chloroplastic (315 aa).

The N-terminal 39 residues, 1-39 (MVSSVLSIPPQTCLLPRLPISDSVNCKSKIVYCLSTSVR), are a transit peptide targeting the chloroplast. The segment covering 44–65 (KRQSTARTRSFTETNRRTPSVQ) has biased composition (polar residues). The tract at residues 44-106 (KRQSTARTRS…DNESDWEDDS (63 aa)) is disordered. Residues 72 to 104 (EDPDDGSDSENEYEGEEEDGIGNDLDNESDWED) are compositionally biased toward acidic residues. ANK repeat units lie at residues 151–180 (KSWK…DIDD), 184–213 (DNQT…NPHL), 217–246 (DGAA…DVNV), 250–279 (EGWT…DKTR), and 283–307 (DGKL…VKLL).

Interacts with AKR. No homodimerization observed. As to expression, expressed in roots, inflorescence stems, flowers, siliques, dry seeds and mature cauline leaves.

The protein localises to the plastid. The protein resides in the chloroplast. Its function is as follows. Involved in the initial differentiation of the proplastid during the embryo development. Also required for correct cotyledon, true leaf and cauline leaf margin development. The sequence is that of Ankyrin repeat domain-containing protein EMB506, chloroplastic (EMB506) from Arabidopsis thaliana (Mouse-ear cress).